The primary structure comprises 768 residues: MLENKKHKKMSLSGKSLLMGTLSTAAIVLSASTVNAATNTDTVDNANASQVTTVKASASVNKNDNSGLKENATNDKVAGTETNLNSSLNSGKETSSQVNDSKEDSSSTQVGSTPISSAIINNGKASSDLNQDSDNISDHFKDNNSQGQSSTSSEKTELKGKIKEIVNNSGIDVTKLTNDQINNLNKVNFDNDPQDGTKLTLNDLDAIGQALIRRDPKYAVPYFNAKEIKNMDAAETKDAQTGKTETLEIWDSWPVQDPITGYVSNYKGYQLVIAMMGMPKKNDNHIYLLYNKYNDNEFSHWRNAGSIFGYNETPDLQEWSGSAIVNKDGSVQLFYTKNDTSNGKLNDQQLATANLKLNVDNNGVSIASVDNDHVIFIGDGKHYQTYDQFSNGKNRNRDNYTLRDPHVVEEENGDRYLVFEANTGSNNYQGEDQVYRWANYGGNDKFNVNNFLSYFGNNDDQALASVANGALGILKLSGDQNNPTVKLDDVYSPLVTSLMVSDEMERPDIVKVGNKYYLFSATRLSRGTKGEITRLANKVVGDNVAMIGFVSDSLTHGYVPLNGSGVVLTASVPANWRTATYSYYAVPIEGKENQLLITAYMTNRGEVAGKGNNSTWAPSFILQLNPDNTTTVLAKLTNQGVWVWNGDSENKNMIGSLEKDSPNSAALDGEWGKFIDWDAINSYSLKPHQPVTPNVPTTPEKPENPTTPNTPDTPRTPEVPTTPVKKTTQSELPKAGAKDGIAATILGAISSMLGVIGLAGISKRKRNN.

An N-terminal signal peptide occupies residues Met-1–Ala-36. 4 stretches are compositionally biased toward polar residues: residues Ser-57–Leu-68, Thr-80–Asn-99, Ser-106–Asp-134, and Asn-143–Ser-153. The interval Ser-57–Leu-158 is disordered. Sucrose contacts are provided by Trp-250, Asp-251, and Ser-320. The Nucleophile role is filled by Asp-251. Asp-398 contributes to the Ca(2+) binding site. Sucrose contacts are provided by Arg-403 and Asp-404. Residues Gln-429, Asn-468, and Asp-502 each contribute to the Ca(2+) site. Glu-503 is a binding site for sucrose. Glu-505 acts as the Proton donor/acceptor in catalysis. Arg-523 is a sucrose binding site. A disordered region spans residues His-688–Gly-736. Residues Val-691 to Thr-727 are compositionally biased toward low complexity. An LPXTG sorting signal motif is present at residues Leu-732–Gly-736. Ala-735 carries the pentaglycyl murein peptidoglycan amidated alanine modification. The propeptide at Gly-736–Asn-768 is removed by sortase.

It belongs to the glycosyl hydrolase 68 family.

It localises to the secreted. The protein resides in the cell wall. It is found in the cell surface. The catalysed reaction is [6)-beta-D-fructofuranosyl-(2-&gt;](n) alpha-D-glucopyranoside + sucrose = [6)-beta-D-fructofuranosyl-(2-&gt;](n+1) alpha-D-glucopyranoside + D-glucose. Calcium ions are required for optimal activity, but do not seem to be essential since addition of EDTA causes only a 48% drop in activity. Ca(2+) may play an important structural role and promote stability of levansucrase. Fructosyltransferase that catalyzes the polymerization of the fructose moiety of sucrose to produce levan polymer and the fructo-oligosaccharide (FOS) 1-kestose. Is also able to convert raffinose into a fructan polymer and a single oligosaccharide (most likely Gal-Glc-Frc-Frc) in vitro; however, L.gasseri strain DSM 20077 is unable to ferment raffinose. Also displays sucrose hydrolase activity. This is Levansucrase from Lactobacillus gasseri.